The sequence spans 329 residues: Ribonucleoside-diphosphate reductase small chain (329 aa).

The Fe cation site is built by aspartate 75, glutamate 106, and histidine 109. Tyrosine 113 is an active-site residue. Fe cation contacts are provided by glutamate 168, glutamate 202, and histidine 205.

The protein belongs to the ribonucleoside diphosphate reductase small chain family. In terms of assembly, heterodimer of a large and a small chain. Requires Fe cation as cofactor.

Its subcellular location is the cytoplasm. The catalysed reaction is a 2'-deoxyribonucleoside 5'-diphosphate + [thioredoxin]-disulfide + H2O = a ribonucleoside 5'-diphosphate + [thioredoxin]-dithiol. Its function is as follows. Provides the precursors necessary for DNA synthesis. Catalyzes the biosynthesis of deoxyribonucleotides from the corresponding ribonucleotides. This chain is Ribonucleoside-diphosphate reductase small chain, found in Nicotiana tabacum (Common tobacco).